Reading from the N-terminus, the 74-residue chain is UPF0435 protein GTNG_0390 (74 aa).

The protein belongs to the UPF0435 family.

The chain is UPF0435 protein GTNG_0390 from Geobacillus thermodenitrificans (strain NG80-2).